We begin with the raw amino-acid sequence, 159 residues long: MDSTGTGAGGKGKKGAAGRKVGGPRKKSVSRSVKAGLQFPVGRIGRYLKKGRYAQXVGTGAPVYLAAVLEYLAAEVLELAGNAARDNKKTRIIPRHVLLAIRNDEELGKLLGGVTIAHGGVLPNINPVLLPKKTAEKASSGGSKEAKSPKKAAKSPKKA.

The span at 1 to 10 (MDSTGTGAGG) shows a compositional bias: gly residues. 2 disordered regions span residues 1-31 (MDST…SVSR) and 133-159 (KTAE…PKKA). 2 stretches are compositionally biased toward basic residues: residues 11–29 (KGKK…KKSV) and 149–159 (PKKAAKSPKKA). 2 short sequence motifs (SPKK motif) span residues 148–151 (SPKK) and 155–158 (SPKK).

Belongs to the histone H2A family. As to quaternary structure, the nucleosome is a histone octamer containing two molecules each of H2A, H2B, H3 and H4 assembled in one H3-H4 heterotetramer and two H2A-H2B heterodimers. The octamer wraps approximately 147 bp of DNA.

It is found in the nucleus. The protein localises to the chromosome. Core component of nucleosome. Nucleosomes wrap and compact DNA into chromatin, limiting DNA accessibility to the cellular machineries which require DNA as a template. Histones thereby play a central role in transcription regulation, DNA repair, DNA replication and chromosomal stability. DNA accessibility is regulated via a complex set of post-translational modifications of histones, also called histone code, and nucleosome remodeling. This is Histone H2A from Zea mays (Maize).